A 540-amino-acid polypeptide reads, in one-letter code: Chaperonin GroEL 2 (540 aa).

ATP contacts are provided by residues 29-32 (TMGP), K50, 86-90 (DGTTT), G414, and D496.

The protein belongs to the chaperonin (HSP60) family. Forms a cylinder of 14 subunits composed of two heptameric rings stacked back-to-back. Interacts with the co-chaperonin GroES.

It is found in the cytoplasm. The enzyme catalyses ATP + H2O + a folded polypeptide = ADP + phosphate + an unfolded polypeptide.. In terms of biological role, together with its co-chaperonin GroES, plays an essential role in assisting protein folding. The GroEL-GroES system forms a nano-cage that allows encapsulation of the non-native substrate proteins and provides a physical environment optimized to promote and accelerate protein folding. The chain is Chaperonin GroEL 2 from Rhodopirellula baltica (strain DSM 10527 / NCIMB 13988 / SH1).